The sequence spans 311 residues: Sensor histidine kinase YcbM (311 aa).

Residues Met1–Ile21 form a helical membrane-spanning segment. Over Met22–Tyr311 the chain is Cytoplasmic. A Histidine kinase domain is found at Asn92–Thr310. Phosphohistidine; by autocatalysis is present on His95.

The protein resides in the cell membrane. It carries out the reaction ATP + protein L-histidine = ADP + protein N-phospho-L-histidine.. In terms of biological role, member of the two-component regulatory system YcbM/YcbL. Probably activates YcbL by phosphorylation. This chain is Sensor histidine kinase YcbM (ycbM), found in Bacillus subtilis (strain 168).